The primary structure comprises 252 residues: Serine/threonine phosphatase stp (252 aa).

The segment covering Met-1–Asp-18 has biased composition (basic and acidic residues). The disordered stretch occupies residues Met-1–Phe-23. The region spanning His-2–Arg-242 is the PPM-type phosphatase domain. Residues Asp-36, Gly-37, Asp-194, and Asp-233 each coordinate Mn(2+).

Belongs to the PP2C family. Mn(2+) is required as a cofactor.

It localises to the cytoplasm. The protein localises to the membrane. The catalysed reaction is O-phospho-L-seryl-[protein] + H2O = L-seryl-[protein] + phosphate. It carries out the reaction O-phospho-L-threonyl-[protein] + H2O = L-threonyl-[protein] + phosphate. In terms of biological role, protein phosphatase that dephosphorylates EF-Tu. In Listeria monocytogenes serotype 4b (strain F2365), this protein is Serine/threonine phosphatase stp (stp).